Here is a 186-residue protein sequence, read N- to C-terminus: tRNA (cytidine(56)-2'-O)-methyltransferase (186 aa).

S-adenosyl-L-methionine contacts are provided by residues L84 and 110-114 (GAEKV).

This sequence belongs to the aTrm56 family. In terms of assembly, homodimer.

It localises to the cytoplasm. The enzyme catalyses cytidine(56) in tRNA + S-adenosyl-L-methionine = 2'-O-methylcytidine(56) in tRNA + S-adenosyl-L-homocysteine + H(+). Functionally, specifically catalyzes the AdoMet-dependent 2'-O-ribose methylation of cytidine at position 56 in tRNAs. This is tRNA (cytidine(56)-2'-O)-methyltransferase from Staphylothermus marinus (strain ATCC 43588 / DSM 3639 / JCM 9404 / F1).